Consider the following 227-residue polypeptide: NAD(P)H-quinone oxidoreductase subunit K, chloroplastic (227 aa).

Residues Cys43, Cys44, Cys108, and Cys139 each contribute to the [4Fe-4S] cluster site.

The protein belongs to the complex I 20 kDa subunit family. As to quaternary structure, NDH is composed of at least 16 different subunits, 5 of which are encoded in the nucleus. [4Fe-4S] cluster is required as a cofactor.

Its subcellular location is the plastid. It is found in the chloroplast thylakoid membrane. It catalyses the reaction a plastoquinone + NADH + (n+1) H(+)(in) = a plastoquinol + NAD(+) + n H(+)(out). It carries out the reaction a plastoquinone + NADPH + (n+1) H(+)(in) = a plastoquinol + NADP(+) + n H(+)(out). Functionally, NDH shuttles electrons from NAD(P)H:plastoquinone, via FMN and iron-sulfur (Fe-S) centers, to quinones in the photosynthetic chain and possibly in a chloroplast respiratory chain. It has NADH- and deamino-NADH-specific dehydrogenase activity, using ferricyanide or quinones as acceptors. The immediate electron acceptor for the enzyme in this species is believed to be plastoquinone. Couples the redox reaction to proton translocation, and thus conserves the redox energy in a proton gradient. This is NAD(P)H-quinone oxidoreductase subunit K, chloroplastic from Pisum sativum (Garden pea).